We begin with the raw amino-acid sequence, 506 residues long: Protein EFFECTOR OF TRANSCRIPTION 1 (506 aa).

In terms of domain architecture, GIY-YIG spans 185–225 (AFQGLYELSHDHGRKDDVLVANLGQPESIRSRLRSYSRSFA). Positions 234-247 (LSQTILPTTQNKSD) are enriched in polar residues. Positions 234–298 (LSQTILPTTQ…VSEKHDDIVD (65 aa)) are disordered. Basic and acidic residues predominate over residues 248-272 (NQTEEKKSDSEEEREVSSDAAEKES). The span at 273–288 (NSLPSILRLSRSRPQP) shows a compositional bias: low complexity. Cx9Cx9RCx2HK repeat units lie at residues 306–331 (CGVL…TEHK) and 361–386 (CGVI…EDHK). The span at 404 to 413 (KAVNEDKSKP) shows a compositional bias: basic and acidic residues. The tract at residues 404-426 (KAVNEDKSKPETSTGMNQEGSGL) is disordered. A compositionally biased stretch (polar residues) spans 414-423 (ETSTGMNQEG). Cx9Cx9RCx2HK repeat units lie at residues 428-453 (CEAT…WQHK) and 475-500 (CGFK…EEHK).

In terms of tissue distribution, expressed in rosette leaves, stipules, stems, flowers, siliques and mature seeds. Expressed in the vascular bundles of xylem in shoot parenchyma cells. Expressed in the remnant cytoplasm of differentiated fiber cells and in protoxylem element of parenchymal cells.

It localises to the cytoplasm. Its subcellular location is the nucleus. In terms of biological role, transcriptional regulator involved in the regulation of cell differentiation in meristems. Binds DNA without sequence preference. This Arabidopsis thaliana (Mouse-ear cress) protein is Protein EFFECTOR OF TRANSCRIPTION 1.